Here is a 207-residue protein sequence, read N- to C-terminus: Large ribosomal subunit protein uL4 (207 aa).

The interval 50–76 is disordered; the sequence is KTKTVSEVSGTTKKPFKQKGTGNARQG.

It belongs to the universal ribosomal protein uL4 family. Part of the 50S ribosomal subunit.

In terms of biological role, one of the primary rRNA binding proteins, this protein initially binds near the 5'-end of the 23S rRNA. It is important during the early stages of 50S assembly. It makes multiple contacts with different domains of the 23S rRNA in the assembled 50S subunit and ribosome. Its function is as follows. Forms part of the polypeptide exit tunnel. This chain is Large ribosomal subunit protein uL4, found in Rickettsia canadensis (strain McKiel).